The chain runs to 324 residues: MKPSVILYKALPDDLLQRLQEHFTVHQVANLSPQTVEQNAAIFAEAEGLLGSNENVDAALLEKMPKLRATSTISVGYDNFDVDALTARKILLMHTPTVLTETVADTLMALVLSTARRVVEVAERVKAGEWTASIGPDWYGTDVHHKTLGIVGMGRIGMALAQRAHFGFNMPILYNARRHHKEAEERFNARYCDLDTLLQESDFVCLILPLTDETHHLFGAEQFAKMKPSAIFINAGRGPVVDENALIAALQKGEIHAAGLDVFEQEPLSVDSPLLSMANVVAVPHIGSATHETRYGMAACAVDNLIDALQGKVEKNCVNPHVAD.

Residues Arg237 and Glu266 contribute to the active site. The Proton donor role is filled by His285.

Belongs to the D-isomer specific 2-hydroxyacid dehydrogenase family. GhrB subfamily. As to quaternary structure, homodimer.

The protein localises to the cytoplasm. It catalyses the reaction glycolate + NADP(+) = glyoxylate + NADPH + H(+). The catalysed reaction is (R)-glycerate + NAD(+) = 3-hydroxypyruvate + NADH + H(+). The enzyme catalyses (R)-glycerate + NADP(+) = 3-hydroxypyruvate + NADPH + H(+). Its function is as follows. Catalyzes the NADPH-dependent reduction of glyoxylate and hydroxypyruvate into glycolate and glycerate, respectively. This Shigella boydii serotype 4 (strain Sb227) protein is Glyoxylate/hydroxypyruvate reductase B.